Consider the following 278-residue polypeptide: 4-diphosphocytidyl-2-C-methyl-D-erythritol kinase (278 aa).

Lys9 is an active-site residue. ATP is bound at residue 89–99 (PVASGIGGGSA). Asp128 is an active-site residue.

This sequence belongs to the GHMP kinase family. IspE subfamily.

It carries out the reaction 4-CDP-2-C-methyl-D-erythritol + ATP = 4-CDP-2-C-methyl-D-erythritol 2-phosphate + ADP + H(+). It functions in the pathway isoprenoid biosynthesis; isopentenyl diphosphate biosynthesis via DXP pathway; isopentenyl diphosphate from 1-deoxy-D-xylulose 5-phosphate: step 3/6. Catalyzes the phosphorylation of the position 2 hydroxy group of 4-diphosphocytidyl-2C-methyl-D-erythritol. In Cereibacter sphaeroides (strain KD131 / KCTC 12085) (Rhodobacter sphaeroides), this protein is 4-diphosphocytidyl-2-C-methyl-D-erythritol kinase.